The chain runs to 394 residues: RHOMBOID-like protein 4 (394 aa).

A disordered region spans residues 1–51; it reads MGEKDSETAPIWGKTRERERSNNNNIQPMDLESSSSVSGQQRSLTQSRSSY. Positions 39 to 49 are enriched in polar residues; it reads GQQRSLTQSRS. The next 7 membrane-spanning stretches (helical) occupy residues 64–84, 147–167, 175–195, 201–221, 231–251, 254–274, and 300–320; these read WFPW…VITM, WLHG…FIGI, FIRI…LSAL, ISVG…SEIF, VVTI…GVLP, DNFA…VLLI, and ILWT…LISL. Serine 206 serves as the catalytic Nucleophile. Catalysis depends on histidine 258, which acts as the Charge relay system.

Belongs to the peptidase S54 family.

The protein localises to the membrane. The enzyme catalyses Cleaves type-1 transmembrane domains using a catalytic dyad composed of serine and histidine that are contributed by different transmembrane domains.. In terms of biological role, probable rhomboid-type serine protease that catalyzes intramembrane proteolysis. In Arabidopsis thaliana (Mouse-ear cress), this protein is RHOMBOID-like protein 4.